Reading from the N-terminus, the 907-residue chain is Protein translocase subunit SecA (907 aa).

ATP contacts are provided by residues Gln-87, 105–109, and Asp-511; that span reads GEGKT. Cys-891, Cys-893, Cys-902, and His-903 together coordinate Zn(2+).

It belongs to the SecA family. Monomer and homodimer. Part of the essential Sec protein translocation apparatus which comprises SecA, SecYEG and auxiliary proteins SecDF-YajC and YidC. The cofactor is Zn(2+).

It is found in the cell inner membrane. The protein localises to the cytoplasm. It carries out the reaction ATP + H2O + cellular proteinSide 1 = ADP + phosphate + cellular proteinSide 2.. Its function is as follows. Part of the Sec protein translocase complex. Interacts with the SecYEG preprotein conducting channel. Has a central role in coupling the hydrolysis of ATP to the transfer of proteins into and across the cell membrane, serving both as a receptor for the preprotein-SecB complex and as an ATP-driven molecular motor driving the stepwise translocation of polypeptide chains across the membrane. The polypeptide is Protein translocase subunit SecA (Aromatoleum aromaticum (strain DSM 19018 / LMG 30748 / EbN1) (Azoarcus sp. (strain EbN1))).